Reading from the N-terminus, the 325-residue chain is Transaldolase (325 aa).

Residue Lys125 is the Schiff-base intermediate with substrate of the active site.

This sequence belongs to the transaldolase family. Type 2 subfamily.

Its subcellular location is the cytoplasm. The catalysed reaction is D-sedoheptulose 7-phosphate + D-glyceraldehyde 3-phosphate = D-erythrose 4-phosphate + beta-D-fructose 6-phosphate. It functions in the pathway carbohydrate degradation; pentose phosphate pathway; D-glyceraldehyde 3-phosphate and beta-D-fructose 6-phosphate from D-ribose 5-phosphate and D-xylulose 5-phosphate (non-oxidative stage): step 2/3. Its function is as follows. Transaldolase is important for the balance of metabolites in the pentose-phosphate pathway. This chain is Transaldolase, found in Campylobacter jejuni subsp. jejuni serotype O:6 (strain 81116 / NCTC 11828).